The primary structure comprises 215 residues: Ribonuclease T (215 aa).

The region spanning 21 to 195 (VVIDVETAGF…YDSKKTAELF (175 aa)) is the Exonuclease domain. Residues Asp-24, Glu-26, His-182, and Asp-187 each coordinate Mg(2+). His-182 acts as the Proton donor/acceptor in catalysis.

This sequence belongs to the RNase T family. Homodimer. Mg(2+) is required as a cofactor.

Functionally, trims short 3' overhangs of a variety of RNA species, leaving a one or two nucleotide 3' overhang. Responsible for the end-turnover of tRNA: specifically removes the terminal AMP residue from uncharged tRNA (tRNA-C-C-A). Also appears to be involved in tRNA biosynthesis. This chain is Ribonuclease T, found in Wigglesworthia glossinidia brevipalpis.